A 364-amino-acid chain; its full sequence is Histidinol-phosphate aminotransferase (364 aa).

N6-(pyridoxal phosphate)lysine is present on K226.

The protein belongs to the class-II pyridoxal-phosphate-dependent aminotransferase family. Histidinol-phosphate aminotransferase subfamily. Homodimer. Pyridoxal 5'-phosphate is required as a cofactor.

The enzyme catalyses L-histidinol phosphate + 2-oxoglutarate = 3-(imidazol-4-yl)-2-oxopropyl phosphate + L-glutamate. The protein operates within amino-acid biosynthesis; L-histidine biosynthesis; L-histidine from 5-phospho-alpha-D-ribose 1-diphosphate: step 7/9. The protein is Histidinol-phosphate aminotransferase of Campylobacter jejuni subsp. jejuni serotype O:6 (strain 81116 / NCTC 11828).